A 363-amino-acid chain; its full sequence is MKDNFSFAATSRNITSSLPFVNLNMSGTNDLIFNCSHKPSDKHLEAIPVLYYLIFVIGFAVNIIVVSLFCCQKGPKKVSSIYIFNLAVADLLLLATLPLWATYYSYRYDWLFGPVMCKVFGSFLTLNMFASIFFITCMSVDRYQSVIYPFLSQRRNPWQASYVVPLVWCMACLSSLPTFYFRDVRTIEYLGVNACVMAFPPEKYAQWSAGIALMKNVLGFIIPLIFIATCYFGIRKHLLKTNSYGKNRITRDQVLKMAAAVVLAFIICWLPFHVLTFLDALSWMGIINSCEVMAVIDLALPFAILLGFTNSCVNPFLYCFVGNRFQQKLRSMFRVPITWLQGKRETMSCRKSSSLREMDTFVS.

At 1-45 (MKDNFSFAATSRNITSSLPFVNLNMSGTNDLIFNCSHKPSDKHLE) the chain is on the extracellular side. Residues Asn-4, Asn-13, Asn-24, and Asn-34 are each glycosylated (N-linked (GlcNAc...) asparagine). Disulfide bonds link Cys-35–Cys-290 and Cys-117–Cys-195. The helical transmembrane segment at 46 to 70 (AIPVLYYLIFVIGFAVNIIVVSLFC) threads the bilayer. The Cytoplasmic segment spans residues 71–80 (CQKGPKKVSS). The helical transmembrane segment at 81–104 (IYIFNLAVADLLLLATLPLWATYY) threads the bilayer. 2 residues coordinate angiotensin II: Tyr-103 and Tyr-104. The Extracellular segment spans residues 105-114 (SYRYDWLFGP). A helical membrane pass occupies residues 115–140 (VMCKVFGSFLTLNMFASIFFITCMSV). Residues 141-159 (DRYQSVIYPFLSQRRNPWQ) are Cytoplasmic-facing. A helical membrane pass occupies residues 160–181 (ASYVVPLVWCMACLSSLPTFYF). Positions 182, 204, and 215 each coordinate angiotensin II. The Extracellular portion of the chain corresponds to 182–206 (RDVRTIEYLGVNACVMAFPPEKYAQ). The chain crosses the membrane as a helical span at residues 207–232 (WSAGIALMKNVLGFIIPLIFIATCYF). At 233 to 257 (GIRKHLLKTNSYGKNRITRDQVLKM) the chain is on the cytoplasmic side. Residues 258-281 (AAAVVLAFIICWLPFHVLTFLDAL) form a helical membrane-spanning segment. Asp-279 provides a ligand contact to angiotensin II. At 282 to 294 (SWMGIINSCEVMA) the chain is on the extracellular side. Residues 295–320 (VIDLALPFAILLGFTNSCVNPFLYCF) traverse the membrane as a helical segment. Asp-297 contacts angiotensin II. Residues 321–363 (VGNRFQQKLRSMFRVPITWLQGKRETMSCRKSSSLREMDTFVS) lie on the Cytoplasmic side of the membrane. The helix VIII stretch occupies residues 324-333 (RFQQKLRSMF). Ser-354 bears the Phosphoserine; by PKC mark.

It belongs to the G-protein coupled receptor 1 family. In terms of assembly, interacts with MTUS1.

Its subcellular location is the cell membrane. In terms of biological role, receptor for angiotensin II, a vasoconstricting peptide. Signals primarily via a non-canonical G-protein- and beta-arrestin independent pathways. Cooperates with MTUS1 to inhibit ERK2 activation and cell proliferation. The chain is Type-2 angiotensin II receptor (AGTR2) from Meriones unguiculatus (Mongolian jird).